Reading from the N-terminus, the 264-residue chain is tRNA pseudouridine synthase A (264 aa).

Asp51 functions as the Nucleophile in the catalytic mechanism. Residue Tyr109 coordinates substrate.

It belongs to the tRNA pseudouridine synthase TruA family. Homodimer.

The enzyme catalyses uridine(38/39/40) in tRNA = pseudouridine(38/39/40) in tRNA. Functionally, formation of pseudouridine at positions 38, 39 and 40 in the anticodon stem and loop of transfer RNAs. This Staphylococcus aureus (strain MRSA252) protein is tRNA pseudouridine synthase A.